The sequence spans 160 residues: Ureidoglycolate lyase (160 aa).

It belongs to the ureidoglycolate lyase family. As to quaternary structure, homodimer. Requires Ni(2+) as cofactor.

It carries out the reaction (S)-ureidoglycolate = urea + glyoxylate. Its pathway is nitrogen metabolism; (S)-allantoin degradation. Catalyzes the catabolism of the allantoin degradation intermediate (S)-ureidoglycolate, generating urea and glyoxylate. Involved in the utilization of allantoin as nitrogen source. This is Ureidoglycolate lyase from Salmonella agona (strain SL483).